We begin with the raw amino-acid sequence, 411 residues long: Dihydrolipoyllysine-residue succinyltransferase component of 2-oxoglutarate dehydrogenase complex (411 aa).

A Lipoyl-binding domain is found at 2–77; it reads TTEIRVPTLG…EVNALLGAVE (76 aa). Lysine 43 is modified (N6-lipoyllysine). The span at 82-100 shows a compositional bias: low complexity; it reads SVAKSPSSSETSVSAAPSE. Positions 82-115 are disordered; that stretch reads SVAKSPSSSETSVSAAPSELEQSSSSNTMPPAPS. The segment covering 101 to 110 has biased composition (polar residues); that stretch reads LEQSSSSNTM. Positions 111–148 constitute a Peripheral subunit-binding (PSBD) domain; sequence PPAPSAAKLMAENNIAKSDILGSGKRGQILKEDVLNVL. Residues histidine 382 and aspartate 386 contribute to the active site.

This sequence belongs to the 2-oxoacid dehydrogenase family. Forms a 24-polypeptide structural core with octahedral symmetry. Part of the 2-oxoglutarate dehydrogenase (OGDH) complex composed of E1 (2-oxoglutarate dehydrogenase), E2 (dihydrolipoamide succinyltransferase) and E3 (dihydrolipoamide dehydrogenase); the complex contains multiple copies of the three enzymatic components (E1, E2 and E3). It depends on (R)-lipoate as a cofactor.

It catalyses the reaction N(6)-[(R)-dihydrolipoyl]-L-lysyl-[protein] + succinyl-CoA = N(6)-[(R)-S(8)-succinyldihydrolipoyl]-L-lysyl-[protein] + CoA. Its pathway is amino-acid degradation; L-lysine degradation via saccharopine pathway; glutaryl-CoA from L-lysine: step 6/6. E2 component of the 2-oxoglutarate dehydrogenase (OGDH) complex which catalyzes the second step in the conversion of 2-oxoglutarate to succinyl-CoA and CO(2). The sequence is that of Dihydrolipoyllysine-residue succinyltransferase component of 2-oxoglutarate dehydrogenase complex (sucB) from Bartonella vinsonii subsp. berkhoffii.